We begin with the raw amino-acid sequence, 122 residues long: Large ribosomal subunit protein uL14 (122 aa).

The protein belongs to the universal ribosomal protein uL14 family. As to quaternary structure, part of the 50S ribosomal subunit. Forms a cluster with proteins L3 and L19. In the 70S ribosome, L14 and L19 interact and together make contacts with the 16S rRNA in bridges B5 and B8.

Functionally, binds to 23S rRNA. Forms part of two intersubunit bridges in the 70S ribosome. The sequence is that of Large ribosomal subunit protein uL14 from Phytoplasma mali (strain AT).